The following is a 388-amino-acid chain: Processive diacylglycerol beta-glucosyltransferase (388 aa).

This sequence belongs to the glycosyltransferase 28 family. UgtP subfamily.

It localises to the cell membrane. It carries out the reaction a 1,2-diacyl-3-O-(beta-D-glucopyranosyl)-sn-glycerol + UDP-alpha-D-glucose = a 1,2-diacyl-3-O-(beta-D-Glc-(1-&gt;6)-beta-D-Glc)-sn-glycerol + UDP + H(+). The catalysed reaction is a 1,2-diacyl-3-O-(beta-D-Glc-(1-&gt;6)-beta-D-Glc)-sn-glycerol + UDP-alpha-D-glucose = a 1,2-diacyl-3-O-(beta-D-Glc-(1-&gt;6)-beta-D-Glc-(1-&gt;6)-beta-D-Glc)-sn-glycerol + UDP + H(+). The enzyme catalyses a 1,2-diacyl-sn-glycerol + UDP-alpha-D-glucose = a 1,2-diacyl-3-O-(beta-D-glucopyranosyl)-sn-glycerol + UDP + H(+). The protein operates within glycolipid metabolism; diglucosyl-diacylglycerol biosynthesis. Functionally, processive glucosyltransferase involved in the biosynthesis of both the bilayer- and non-bilayer-forming membrane glucolipids. Is able to successively transfer up to three glucosyl residues to diacylglycerol (DAG), thereby catalyzing the formation of beta-monoglucosyl-DAG (3-O-(beta-D-glucopyranosyl)-1,2-diacyl-sn-glycerol), beta-diglucosyl-DAG (3-O-(beta-D-glucopyranosyl-beta-(1-&gt;6)-D-glucopyranosyl)-1,2-diacyl-sn-glycerol) and beta-triglucosyl-DAG (3-O-(beta-D-glucopyranosyl-beta-(1-&gt;6)-D-glucopyranosyl-beta-(1-&gt;6)-D-glucopyranosyl)-1,2-diacyl-sn-glycerol). Beta-diglucosyl-DAG is the predominant glycolipid found in Bacillales and is also used as a membrane anchor for lipoteichoic acid (LTA). This Bacillus cereus (strain 03BB102) protein is Processive diacylglycerol beta-glucosyltransferase.